Here is a 445-residue protein sequence, read N- to C-terminus: Serine protease inhibitor A3F (445 aa).

N-linked (GlcNAc...) asparagine glycosylation is found at asparagine 28, asparagine 94, asparagine 174, and asparagine 259. The segment at 357-382 (GTEAAAGTGYQNLQCCQGVIYSMKIY) is RCL.

This sequence belongs to the serpin family.

This chain is Serine protease inhibitor A3F (Serpina3f), found in Mus musculus (Mouse).